The sequence spans 365 residues: 25S rRNA (uridine(2843)-N(3))-methyltransferase (365 aa).

This sequence belongs to the class I-like SAM-binding methyltransferase superfamily.

It localises to the cytoplasm. The protein localises to the nucleus. The catalysed reaction is uridine(2843) in 25S rRNA + S-adenosyl-L-methionine = N(3)-methyluridine(2843) in 25S rRNA + S-adenosyl-L-homocysteine + H(+). Its function is as follows. S-adenosyl-L-methionine-dependent methyltransferase that specifically methylates the N(3) position of uridine 2843 (m3U2843) in 25S rRNA. The chain is 25S rRNA (uridine(2843)-N(3))-methyltransferase (BMT6) from Saccharomyces cerevisiae (strain ATCC 204508 / S288c) (Baker's yeast).